We begin with the raw amino-acid sequence, 199 residues long: uncharacterized protein (199 aa).

4 helical membrane-spanning segments follow: residues 35 to 55 (CELAFSILILFCAFAELIFYD), 57 to 77 (FVIFFLMIIASFVFVLLYLEF), 94 to 114 (LSAAFMSMVCWLSVLIPIFFG), and 131 to 151 (YYGCQVIFGSLLTTFAAASFA).

Its subcellular location is the membrane. This is an uncharacterized protein from Caenorhabditis elegans.